The chain runs to 560 residues: MPQTRSQAQATISFPKRKLSRALNKAKNSSDAKLEPTNVQTVTCSPRVKALPLSPRKRLGDDNLCNTPHLPPCSPPKQGKKENGPPHSHTLKGRRLVFDNQLTIKSPSKRELAKVHQNKILSSVRKSQEITTNSEQRCPLKKESACVRLFKQEGTCYQQAKLVLNTAVPDRLPAREREMDVIRNFLREHICGKKAGSLYLSGAPGTGKTACLSRILQDLKKELKGFKTIMLNCMSLRTAQAVFPAIAQEICQEEVSRPAGKDMMRKLEKHMTAEKGPMIVLVLDEMDQLDSKGQDVLYTLFEWPWLSNSHLVLIGIANTLDLTDRILPRLQAREKCKPQLLNFPPYTRNQIVTILQDRLNQVSRDQVLDNAAVQFCARKVSAVSGDVRKALDVCRRAIEIVESDVKSQTILKPLSECKSPSEPLIPKRVGLIHISQVISEVDGNRMTLSQEGAQDSFPLQQKILVCSLMLLIRQLKIKEVTLGKLYEAYSKVCRKQQVAAVDQSECLSLSGLLEARGILGLKRNKETRLTKVFFKIEEKEIEHALKDKALIGNILATGLP.

2 stretches are compositionally biased toward polar residues: residues 1-12 and 35-44; these read MPQTRSQAQATI and EPTNVQTVTC. A disordered region spans residues 1–91; sequence MPQTRSQAQA…ENGPPHSHTL (91 aa). Phosphoserine occurs at positions 45 and 54. The residue at position 67 (T67) is a Phosphothreonine. Position 74 is a phosphoserine (S74). A Cy motif is present at residues 93–100; that stretch reads GRRLVFDN. Phosphoserine is present on residues S106 and S127. 202–209 contacts ATP; the sequence is GAPGTGKT. Phosphoserine is present on S419.

It belongs to the CDC6/cdc18 family. As to quaternary structure, interacts with PCNA, ORC1, cyclin-CDK. Interacts with HUWE1. Interacts with ANKRD17. Interacts with GRWD1; origin binding of GRWD1 is dependent on CDC6. Interacts with CDT1; are mutually dependent on one another for loading MCM complexes onto chromatin. Interacts with TTC4. Interacts (via Cy motif) with CCNF; the interaction takes place during G2 and M phase. Interacts with CDH1. Ubiquitinated by the SCF(CCNF) E3 ubiquitin-protein ligase complex.

Its subcellular location is the nucleus. The protein resides in the cytoplasm. In terms of biological role, involved in the initiation of DNA replication. Also participates in checkpoint controls that ensure DNA replication is completed before mitosis is initiated. This Homo sapiens (Human) protein is Cell division control protein 6 homolog (CDC6).